We begin with the raw amino-acid sequence, 740 residues long: Ethylene receptor 1 (740 aa).

Helical transmembrane passes span 23 to 43 (ISDF…IYFV), 54 to 74 (VLVQ…INLW), and 92 to 112 (VLTA…IPDL). Positions 65 and 69 each coordinate Cu cation. The region spanning 158-307 (DRHTILKTTL…VVADQVAVAL (150 aa)) is the GAF domain. One can recognise a Histidine kinase domain in the interval 350 to 588 (VMNHEMRTPM…TFIVKLGIAD (239 aa)). His353 carries the phosphohistidine; by autocatalysis modification. The Response regulatory domain maps to 614-731 (KVLVMDDNGV…KMRSVLSELI (118 aa)). At Asp662 the chain carries 4-aspartylphosphate.

This sequence belongs to the ethylene receptor family. As to quaternary structure, homodimer; disulfide-linked. Cu cation is required as a cofactor. Post-translationally, activation probably requires a transfer of a phosphate group between a His in the transmitter domain and an Asp of the receiver domain. In terms of tissue distribution, in seeds and placenta.

The protein localises to the endoplasmic reticulum membrane. It catalyses the reaction ATP + protein L-histidine = ADP + protein N-phospho-L-histidine.. In terms of biological role, may act early in the ethylene signal transduction pathway, possibly as an ethylene receptor, or as a regulator of the pathway. The polypeptide is Ethylene receptor 1 (ETR1) (Cucumis melo var. cantalupensis (Netted muskmelon)).